The sequence spans 1106 residues: Platelet-derived growth factor receptor beta (1106 aa).

Positions methionine 1–glycine 32 are cleaved as a signal peptide. Ig-like C2-type domains follow at residues leucine 33–valine 120, proline 129–glutamine 210, isoleucine 214–threonine 309, histidine 331–alanine 403, and proline 416–valine 524. The Extracellular segment spans residues leucine 33–valine 532. Asparagine 45, asparagine 89, and asparagine 103 each carry an N-linked (GlcNAc...) asparagine glycan. The cysteines at positions 54 and 100 are disulfide-linked. Residues cysteine 149 and cysteine 190 are joined by a disulfide bond. Residues asparagine 215 and asparagine 230 are each glycosylated (N-linked (GlcNAc...) asparagine). A disulfide bridge links cysteine 235 with cysteine 291. Residues asparagine 292, asparagine 307, asparagine 354, asparagine 371, asparagine 468, and asparagine 479 are each glycosylated (N-linked (GlcNAc...) asparagine). The cysteines at positions 436 and 508 are disulfide-linked. Residues valine 533–isoleucine 553 traverse the membrane as a helical segment. At methionine 554–leucine 1106 the chain is on the cytoplasmic side. Phosphotyrosine; by autocatalysis is present on residues tyrosine 562, tyrosine 579, and tyrosine 581. Residues leucine 600 to leucine 962 form the Protein kinase domain. ATP-binding positions include leucine 606 to valine 614 and lysine 634. Tyrosine 686 carries the phosphotyrosine; by ABL1 and ABL2 modification. A phosphotyrosine; by autocatalysis mark is found at tyrosine 716, tyrosine 740, tyrosine 751, tyrosine 763, tyrosine 771, tyrosine 775, and tyrosine 778. Aspartate 826 acts as the Proton acceptor in catalysis. Tyrosine 857 carries the phosphotyrosine; by autocatalysis modification. A phosphotyrosine; by ABL1 and ABL2 mark is found at tyrosine 934 and tyrosine 970. Phosphotyrosine; by autocatalysis occurs at positions 1009 and 1021. The tract at residues asparagine 1019 to leucine 1106 is disordered. Residues serine 1043–cysteine 1060 show a composition bias toward polar residues. Residues proline 1066 to glutamine 1088 show a composition bias toward acidic residues.

Belongs to the protein kinase superfamily. Tyr protein kinase family. CSF-1/PDGF receptor subfamily. Interacts with homodimeric PDGFB and PDGFD, and with heterodimers formed by PDGFA and PDGFB. May also interact with homodimeric PDGFC. Monomer in the absence of bound ligand. Interaction with homodimeric PDGFB, heterodimers formed by PDGFA and PDGFB or homodimeric PDGFD, leads to receptor dimerization, where both PDGFRA homodimers and heterodimers with PDGFRB are observed. Interacts with SH2B2/APS. Interacts directly (tyrosine phosphorylated) with SHB. Interacts (tyrosine phosphorylated) with PIK3R1 and RASA1. Interacts (tyrosine phosphorylated) with CBL. Interacts (tyrosine phosphorylated) with SRC and SRC family kinases. Interacts (tyrosine phosphorylated) with PIK3C2B, maybe indirectly. Interacts (tyrosine phosphorylated) with SHC1, GRB7, GRB10 and NCK1. Interaction with GRB2 is mediated by SHC1. Interacts (via C-terminus) with NHERF1. In terms of processing, autophosphorylated on tyrosine residues upon ligand binding. Autophosphorylation occurs in trans, i.e. one subunit of the dimeric receptor phosphorylates tyrosine residues on the other subunit. Phosphorylation at Tyr-579, and to a lesser degree, at Tyr-581, is important for interaction with SRC family kinases. Phosphorylation at Tyr-740 and Tyr-751 is important for interaction with PIK3R1. Phosphorylation at Tyr-751 is important for interaction with NCK1. Phosphorylation at Tyr-771 and Tyr-857 is important for interaction with RASA1/GAP. Phosphorylation at Tyr-857 is important for efficient phosphorylation of PLCG1 and PTPN11, resulting in increased phosphorylation of AKT1, MAPK1/ERK2 and/or MAPK3/ERK1, PDCD6IP/ALIX and STAM, and in increased cell proliferation. Phosphorylation at Tyr-1009 is important for interaction with PTPN11. Phosphorylation at Tyr-1009 and Tyr-1021 is important for interaction with PLCG1. Phosphorylation at Tyr-1021 is important for interaction with CBL; PLCG1 and CBL compete for the same binding site. Dephosphorylated by PTPRJ at Tyr-751, Tyr-857, Tyr-1009 and Tyr-1021. Dephosphorylated by PTPN2 at Tyr-579 and Tyr-1021. Post-translationally, N-glycosylated. Ubiquitinated. After autophosphorylation, the receptor is polyubiquitinated, leading to its degradation.

The protein resides in the cell membrane. Its subcellular location is the cytoplasmic vesicle. It is found in the lysosome lumen. The catalysed reaction is L-tyrosyl-[protein] + ATP = O-phospho-L-tyrosyl-[protein] + ADP + H(+). Its activity is regulated as follows. Present in an inactive conformation in the absence of bound ligand. Binding of PDGFB and/or PDGFD leads to dimerization and activation by autophosphorylation on tyrosine residues. Inhibited by imatinib. In terms of biological role, tyrosine-protein kinase that acts as a cell-surface receptor for homodimeric PDGFB and PDGFD and for heterodimers formed by PDGFA and PDGFB, and plays an essential role in the regulation of embryonic development, cell proliferation, survival, differentiation, chemotaxis and migration. Plays an essential role in blood vessel development by promoting proliferation, migration and recruitment of pericytes and smooth muscle cells to endothelial cells. Plays a role in the migration of vascular smooth muscle cells and the formation of neointima at vascular injury sites. Required for normal development of the cardiovascular system. Required for normal recruitment of pericytes (mesangial cells) in the kidney glomerulus, and for normal formation of a branched network of capillaries in kidney glomeruli. Promotes rearrangement of the actin cytoskeleton and the formation of membrane ruffles. Binding of its cognate ligands - homodimeric PDGFB, heterodimers formed by PDGFA and PDGFB or homodimeric PDGFD -leads to the activation of several signaling cascades; the response depends on the nature of the bound ligand and is modulated by the formation of heterodimers between PDGFRA and PDGFRB. Phosphorylates PLCG1, PIK3R1, PTPN11, RASA1/GAP, CBL, SHC1 and NCK1. Activation of PLCG1 leads to the production of the cellular signaling molecules diacylglycerol and inositol 1,4,5-trisphosphate, mobilization of cytosolic Ca(2+) and the activation of protein kinase C. Phosphorylation of PIK3R1, the regulatory subunit of phosphatidylinositol 3-kinase, leads to the activation of the AKT1 signaling pathway. Phosphorylation of SHC1, or of the C-terminus of PTPN11, creates a binding site for GRB2, resulting in the activation of HRAS, RAF1 and down-stream MAP kinases, including MAPK1/ERK2 and/or MAPK3/ERK1. Promotes phosphorylation and activation of SRC family kinases. Promotes phosphorylation of PDCD6IP/ALIX and STAM. Receptor signaling is down-regulated by protein phosphatases that dephosphorylate the receptor and its down-stream effectors, and by rapid internalization of the activated receptor. The chain is Platelet-derived growth factor receptor beta (PDGFRB) from Homo sapiens (Human).